A 152-amino-acid chain; its full sequence is MNPQRRRRLWLVLALVLAGGLATTLVAMALQRNVAYLYTPAEVLRGEAGEHARFRLGGMVEKGSFRREAGSLEAHFRVTDGDAQLPVRYDRILPDLFREGQAVVATGRMQQGVFVAEDVLAKHDETYMPKEVADKMGSAHRKHQVAPAKVTQ.

Over 1-8 (MNPQRRRR) the chain is Cytoplasmic. Residues 9 to 29 (LWLVLALVLAGGLATTLVAMA) traverse the membrane as a helical; Signal-anchor for type II membrane protein segment. Residues 30–152 (LQRNVAYLYT…HQVAPAKVTQ (123 aa)) lie on the Periplasmic side of the membrane. The heme site is built by His-123 and Tyr-127.

It belongs to the CcmE/CycJ family.

The protein resides in the cell inner membrane. Its function is as follows. Heme chaperone required for the biogenesis of c-type cytochromes. Transiently binds heme delivered by CcmC and transfers the heme to apo-cytochromes in a process facilitated by CcmF and CcmH. This Xanthomonas campestris pv. campestris (strain 8004) protein is Cytochrome c-type biogenesis protein CcmE 2.